The primary structure comprises 488 residues: Glutamyl-tRNA(Gln) amidotransferase subunit A (488 aa).

Catalysis depends on charge relay system residues K77 and S152. The active-site Acyl-ester intermediate is the S176.

It belongs to the amidase family. GatA subfamily. Heterotrimer of A, B and C subunits.

The catalysed reaction is L-glutamyl-tRNA(Gln) + L-glutamine + ATP + H2O = L-glutaminyl-tRNA(Gln) + L-glutamate + ADP + phosphate + H(+). Functionally, allows the formation of correctly charged Gln-tRNA(Gln) through the transamidation of misacylated Glu-tRNA(Gln) in organisms which lack glutaminyl-tRNA synthetase. The reaction takes place in the presence of glutamine and ATP through an activated gamma-phospho-Glu-tRNA(Gln). This Streptococcus pneumoniae (strain ATCC 700669 / Spain 23F-1) protein is Glutamyl-tRNA(Gln) amidotransferase subunit A.